Here is a 388-residue protein sequence, read N- to C-terminus: Glucose-6-phosphate/phosphate translocator 2, chloroplastic (388 aa).

The N-terminal 68 residues, 1-68 (MLSSIKPSSS…SASNFKREVK (68 aa)), are a transit peptide targeting the chloroplast. 8 helical membrane passes run 95-115 (LKIG…NIYN), 122-142 (FPYP…MMLV), 158-178 (FWKT…AATV), 211-231 (FPLP…LAAI), 233-253 (ELNF…AFVF), 281-301 (LVIL…AAGW), 305-325 (VSQV…FYHL), and 358-378 (IIIF…IAIF). Residues 113-231 (IYNKKVLNAF…IIGGCALAAI (119 aa)) form the EamA domain.

It belongs to the TPT transporter family. GPT (TC 2.A.7.9) subfamily. In terms of tissue distribution, expressed in seeds, flowers, stamens, and rosette leaves, with highest levels found in sepals and senescing leaves.

The protein resides in the plastid. It localises to the chloroplast membrane. Its function is as follows. Glucose 6-phosphate (Glc6P) transporter. Also transports inorganic phosphate, 3-phosphoglycerate, triose phosphates and, to a leser extent, phosphoenolpyruvate. Responsible for the transport of Glc6P into plastids of heterotrophic tissues where it can be used as a carbon source for starch biosynthesis, as substrate for fatty acid biosynthesis or as substrate for NADPH generation via the oxidative pentose phosphate pathway (OPPP). Required for dynamic acclimation of photosynthesis and partitioning of Glc6P between the chloroplast and the cytosol. May modulate the sensing of sugar status during early seedling development. This Arabidopsis thaliana (Mouse-ear cress) protein is Glucose-6-phosphate/phosphate translocator 2, chloroplastic.